A 144-amino-acid chain; its full sequence is uncharacterized protein (144 aa).

2 helical membrane passes run 10-30 (ILTRSSIIIGVIILVASGLGP) and 60-80 (YVFLIYTVSLTKMVGTLAIAV).

It localises to the membrane. This is an uncharacterized protein from Saccharomyces cerevisiae (strain ATCC 204508 / S288c) (Baker's yeast).